An 89-amino-acid chain; its full sequence is Small ribosomal subunit protein eS25A (89 aa).

Belongs to the eukaryotic ribosomal protein eS25 family. Component of the small ribosomal subunit (SSU). Mature yeast ribosomes consist of a small (40S) and a large (60S) subunit. The 40S small subunit contains 1 molecule of ribosomal RNA (18S rRNA) and at least 33 different proteins. The large 60S subunit contains 3 rRNA molecules (25S, 5.8S and 5S rRNA) and at least 46 different proteins.

Its subcellular location is the cytoplasm. Its function is as follows. Component of the ribosome, a large ribonucleoprotein complex responsible for the synthesis of proteins in the cell. The small ribosomal subunit (SSU) binds messenger RNAs (mRNAs) and translates the encoded message by selecting cognate aminoacyl-transfer RNA (tRNA) molecules. The large subunit (LSU) contains the ribosomal catalytic site termed the peptidyl transferase center (PTC), which catalyzes the formation of peptide bonds, thereby polymerizing the amino acids delivered by tRNAs into a polypeptide chain. The nascent polypeptides leave the ribosome through a tunnel in the LSU and interact with protein factors that function in enzymatic processing, targeting, and the membrane insertion of nascent chains at the exit of the ribosomal tunnel. This is Small ribosomal subunit protein eS25A (rps2502) from Schizosaccharomyces pombe (strain 972 / ATCC 24843) (Fission yeast).